A 461-amino-acid chain; its full sequence is Argininosuccinate lyase (461 aa).

The protein belongs to the lyase 1 family. Argininosuccinate lyase subfamily.

Its subcellular location is the cytoplasm. The catalysed reaction is 2-(N(omega)-L-arginino)succinate = fumarate + L-arginine. The protein operates within amino-acid biosynthesis; L-arginine biosynthesis; L-arginine from L-ornithine and carbamoyl phosphate: step 3/3. This chain is Argininosuccinate lyase, found in Chlorobium luteolum (strain DSM 273 / BCRC 81028 / 2530) (Pelodictyon luteolum).